We begin with the raw amino-acid sequence, 550 residues long: Chaperonin GroEL 1 (550 aa).

Residues 29-32, 86-90, Gly413, 477-479, and Asp493 each bind ATP; these read TIGP, DGTTT, and NAA. Residues 524 to 550 are disordered; it reads AVSDGDHGHSHGHGHSHGHSHPQGPGF. The segment covering 533–543 has biased composition (basic residues); the sequence is SHGHGHSHGHS.

Belongs to the chaperonin (HSP60) family. As to quaternary structure, forms a cylinder of 14 subunits composed of two heptameric rings stacked back-to-back. Interacts with the co-chaperonin GroES.

It is found in the cytoplasm. It carries out the reaction ATP + H2O + a folded polypeptide = ADP + phosphate + an unfolded polypeptide.. Together with its co-chaperonin GroES, plays an essential role in assisting protein folding. The GroEL-GroES system forms a nano-cage that allows encapsulation of the non-native substrate proteins and provides a physical environment optimized to promote and accelerate protein folding. The polypeptide is Chaperonin GroEL 1 (Frankia alni (strain DSM 45986 / CECT 9034 / ACN14a)).